Here is a 731-residue protein sequence, read N- to C-terminus: Wall-associated receptor kinase-like 5 (731 aa).

A signal peptide spans 1-26; it reads MKTKTYRFVCLVASVLTLQLMNGSSA. Topologically, residues 27 to 360 are extracellular; it reads ATPPPPPNSK…PAKPLVLQGV (334 aa). Residues asparagine 37, asparagine 43, asparagine 73, asparagine 96, asparagine 124, asparagine 137, asparagine 236, and asparagine 272 are each glycosylated (N-linked (GlcNAc...) asparagine). Residues 285 to 342 form an atypical EGF-like region; the sequence is CLCEYGYFSEMSYRNCYCSLGFTGNPYLRGGCIDNDDCKGPNICEEGTCVNVPGGYRC. 3 cysteine pairs are disulfide-bonded: cysteine 287-cysteine 300, cysteine 322-cysteine 333, and cysteine 328-cysteine 342. The helical transmembrane segment at 361–381 threads the bilayer; it reads LLGLMGLLFLVVGTLGLIIFI. The Cytoplasmic portion of the chain corresponds to 382–731; sequence KKRRRIISSR…EDQVMEISRE (350 aa). The Protein kinase domain maps to 432-705; sequence FSVKRVLGKG…REASLELERI (274 aa). Residues 438 to 446 and lysine 460 contribute to the ATP site; that span reads LGKGSQGTV. Tyrosine 505 bears the Phosphotyrosine mark. Aspartate 557 (proton acceptor) is an active-site residue. Phosphothreonine is present on residues threonine 591 and threonine 596. Tyrosine 604 carries the phosphotyrosine modification. The disordered stretch occupies residues 709–731; it reads PEDLEAHIENDDEEDQVMEISRE.

This sequence belongs to the protein kinase superfamily. Ser/Thr protein kinase family. In terms of tissue distribution, preferentially expressed in roots and flowers.

The protein resides in the membrane. It carries out the reaction L-seryl-[protein] + ATP = O-phospho-L-seryl-[protein] + ADP + H(+). The enzyme catalyses L-threonyl-[protein] + ATP = O-phospho-L-threonyl-[protein] + ADP + H(+). Functionally, serine/threonine-protein kinase that may function as a signaling receptor of extracellular matrix component. May be involved in plant's response to pathogen infection. The protein is Wall-associated receptor kinase-like 5 (WAKL5) of Arabidopsis thaliana (Mouse-ear cress).